The following is a 239-amino-acid chain: Probable transcriptional regulatory protein EF_2866 (239 aa).

It belongs to the TACO1 family. YeeN subfamily.

Its subcellular location is the cytoplasm. The chain is Probable transcriptional regulatory protein EF_2866 from Enterococcus faecalis (strain ATCC 700802 / V583).